A 177-amino-acid chain; its full sequence is ATP-dependent protease subunit HslV (177 aa).

Thr-2 is an active-site residue. Positions 157, 160, and 163 each coordinate Na(+).

Belongs to the peptidase T1B family. HslV subfamily. A double ring-shaped homohexamer of HslV is capped on each side by a ring-shaped HslU homohexamer. The assembly of the HslU/HslV complex is dependent on binding of ATP.

Its subcellular location is the cytoplasm. It carries out the reaction ATP-dependent cleavage of peptide bonds with broad specificity.. With respect to regulation, allosterically activated by HslU binding. Protease subunit of a proteasome-like degradation complex believed to be a general protein degrading machinery. This chain is ATP-dependent protease subunit HslV, found in Aeromonas hydrophila subsp. hydrophila (strain ATCC 7966 / DSM 30187 / BCRC 13018 / CCUG 14551 / JCM 1027 / KCTC 2358 / NCIMB 9240 / NCTC 8049).